The sequence spans 165 residues: Cyclic pyranopterin monophosphate synthase (165 aa).

Substrate is bound by residues F83 to H85 and M120 to E121. Residue D135 is part of the active site.

The protein belongs to the MoaC family. Homohexamer; trimer of dimers.

It catalyses the reaction (8S)-3',8-cyclo-7,8-dihydroguanosine 5'-triphosphate = cyclic pyranopterin phosphate + diphosphate. It participates in cofactor biosynthesis; molybdopterin biosynthesis. Catalyzes the conversion of (8S)-3',8-cyclo-7,8-dihydroguanosine 5'-triphosphate to cyclic pyranopterin monophosphate (cPMP). The chain is Cyclic pyranopterin monophosphate synthase from Xanthomonas campestris pv. campestris (strain B100).